The following is a 305-amino-acid chain: Protoheme IX farnesyltransferase (305 aa).

Helical transmembrane passes span 31–51 (VMSLVMFTGFVGMWLAPYSVH), 52–72 (PFIAVIVLACISLGAGSAGAI), 102–119 (ALSFGLITGFFAVFFMAL), 123–145 (LLASFLLLFTIFYYICIYTIWLK), 151–171 (NIVIGGVSGALPPVIGYAAVS), 179–199 (IILFLIIFIWTPPHSWALALF), 218–238 (ILYTKEQILIYSILLFLVSLM), 240–260 (FFIGMNNFIYLIIAGMLGLVF), and 281–301 (FAYSIFYLFFIFLLLSSTSTI).

This sequence belongs to the UbiA prenyltransferase family. Protoheme IX farnesyltransferase subfamily.

It is found in the cell inner membrane. It catalyses the reaction heme b + (2E,6E)-farnesyl diphosphate + H2O = Fe(II)-heme o + diphosphate. Its pathway is porphyrin-containing compound metabolism; heme O biosynthesis; heme O from protoheme: step 1/1. In terms of biological role, converts heme B (protoheme IX) to heme O by substitution of the vinyl group on carbon 2 of heme B porphyrin ring with a hydroxyethyl farnesyl side group. In Rickettsia akari (strain Hartford), this protein is Protoheme IX farnesyltransferase.